The following is a 215-amino-acid chain: Orotate phosphoribosyltransferase (215 aa).

5-phospho-alpha-D-ribose 1-diphosphate is bound at residue Lys-26. Residue Phe-34 to Phe-35 coordinates orotate. 5-phospho-alpha-D-ribose 1-diphosphate is bound by residues Tyr-72–Lys-73, Arg-99, Lys-100, Lys-103, His-105, and Asp-124–Ala-132. Residues Thr-128 and Arg-156 each coordinate orotate.

Belongs to the purine/pyrimidine phosphoribosyltransferase family. PyrE subfamily. As to quaternary structure, homodimer. Requires Mg(2+) as cofactor.

The enzyme catalyses orotidine 5'-phosphate + diphosphate = orotate + 5-phospho-alpha-D-ribose 1-diphosphate. It participates in pyrimidine metabolism; UMP biosynthesis via de novo pathway; UMP from orotate: step 1/2. Catalyzes the transfer of a ribosyl phosphate group from 5-phosphoribose 1-diphosphate to orotate, leading to the formation of orotidine monophosphate (OMP). The polypeptide is Orotate phosphoribosyltransferase (Hahella chejuensis (strain KCTC 2396)).